A 353-amino-acid polypeptide reads, in one-letter code: UDP-N-acetylglucosamine--N-acetylmuramyl-(pentapeptide) pyrophosphoryl-undecaprenol N-acetylglucosamine transferase (353 aa).

UDP-N-acetyl-alpha-D-glucosamine is bound by residues 10–12, Asn124, Ser183, and Gln283; that span reads TGG.

This sequence belongs to the glycosyltransferase 28 family. MurG subfamily.

It localises to the cell inner membrane. It catalyses the reaction di-trans,octa-cis-undecaprenyl diphospho-N-acetyl-alpha-D-muramoyl-L-alanyl-D-glutamyl-meso-2,6-diaminopimeloyl-D-alanyl-D-alanine + UDP-N-acetyl-alpha-D-glucosamine = di-trans,octa-cis-undecaprenyl diphospho-[N-acetyl-alpha-D-glucosaminyl-(1-&gt;4)]-N-acetyl-alpha-D-muramoyl-L-alanyl-D-glutamyl-meso-2,6-diaminopimeloyl-D-alanyl-D-alanine + UDP + H(+). Its pathway is cell wall biogenesis; peptidoglycan biosynthesis. Functionally, cell wall formation. Catalyzes the transfer of a GlcNAc subunit on undecaprenyl-pyrophosphoryl-MurNAc-pentapeptide (lipid intermediate I) to form undecaprenyl-pyrophosphoryl-MurNAc-(pentapeptide)GlcNAc (lipid intermediate II). In Helicobacter pylori (strain Shi470), this protein is UDP-N-acetylglucosamine--N-acetylmuramyl-(pentapeptide) pyrophosphoryl-undecaprenol N-acetylglucosamine transferase.